A 185-amino-acid chain; its full sequence is Monooxygenase hypC (185 aa).

Transmembrane regions (helical) follow at residues 35–55 (TGTF…PVIL), 75–95 (GHIQ…YAAY), and 106–126 (PFAV…VFMA). The N-linked (GlcNAc...) asparagine glycan is linked to Asn-129. The chain crosses the membrane as a helical span at residues 165–185 (ALFPLSGAVLGLLSTCKIVSF).

Belongs to the anthrone oxygenase family.

It is found in the membrane. Its pathway is mycotoxin biosynthesis. Functionally, monooxygenase; part of the fragmented gene cluster that mediates the biosynthesis of dothistromin (DOTH), a polyketide toxin very similar in structure to the aflatoxin precursor, versicolorin B. The first step of the pathway is the conversion of acetate to norsolorinic acid (NOR) and requires the fatty acid synthase subunits hexA and hexB, as well as the polyketide synthase pksA. PksA combines a hexanoyl starter unit and 7 malonyl-CoA extender units to synthesize the precursor NOR. The hexanoyl starter unit is provided to the acyl-carrier protein (ACP) domain by the fungal fatty acid synthase hexA/hexB. The second step is the conversion of NOR to averantin (AVN) and requires the norsolorinic acid ketoreductase nor1, which catalyzes the dehydration of norsolorinic acid to form (1'S)-averantin. The cytochrome P450 monooxygenase avnA then catalyzes the hydroxylation of AVN to 5'hydroxyaverantin (HAVN). The next step is performed by adhA that transforms HAVN to averufin (AVF). Averufin might then be converted to hydroxyversicolorone by cypX and avfA. Hydroxyversicolorone is further converted versiconal hemiacetal acetate (VHA) by moxY. VHA is then the substrate for the versiconal hemiacetal acetate esterase est1 to yield versiconal (VAL). Versicolorin B synthase vbsA then converts VAL to versicolorin B (VERB) by closing the bisfuran ring. Then, the activity of the versicolorin B desaturase verB leads to versicolorin A (VERA). DotB, a predicted chloroperoxidase, may perform epoxidation of the A-ring of VERA. Alternatively, a cytochrome P450, such as cypX or avnA could catalyze this step. It is also possible that another, uncharacterized, cytochrome P450 enzyme is responsible for this step. Opening of the epoxide could potentially be achieved by the epoxide hydrolase epoA. However, epoA seems not to be required for DOTH biosynthesis, but other epoxide hydrolases may have the ability to complement this hydrolysis. Alternatively, opening of the epoxide ring could be achieved non-enzymatically. The next step is the deoxygenation of ring A to yield the 5,8-dihydroxyanthraquinone which is most likely catalyzed by the NADPH dehydrogenase encoded by ver1. The last stages of DOTH biosynthesis are proposed to involve hydroxylation of the bisfuran. OrdB and norB might have oxidative roles here. An alternative possibility is that cytochrome P450 monoogenases such as avnA and cypX might perform these steps in addition to previously proposed steps. In Dothistroma septosporum (strain NZE10 / CBS 128990) (Red band needle blight fungus), this protein is Monooxygenase hypC.